The following is a 359-amino-acid chain: NAC domain-containing protein 45 (359 aa).

The NAC domain occupies Leu19 to Lys185. Residues Val130 to Glu191 mediate DNA binding.

Expressed in roots. Expressed at low levels in leaves, stems and panicles.

The protein localises to the nucleus. Transcription activator involved in responses to drought stress and salt stress. Transactivates the stress response genes LEA19 and PM19L. This is NAC domain-containing protein 45 from Oryza sativa subsp. japonica (Rice).